The sequence spans 1194 residues: Cohesin subunit SA-2 (1194 aa).

In terms of domain architecture, SCD spans 224 to 309; sequence FVHRYRDAIA…SRFKDRIVSM (86 aa). The segment at 986 to 1027 is disordered; sequence DTMSVMSGMSGRGSSTRSKKIKPPTGKRKLPEAEESSSSDSM. Low complexity predominate over residues 988-1001; sequence MSVMSGMSGRGSST. Basic residues predominate over residues 1002 to 1013; it reads RSKKIKPPTGKR.

Belongs to the SCC3 family. As to quaternary structure, part of the cohesin complex which is composed of a heterodimer between a SMC1 protein (SMC1A or SMC1B) and SMC3, which are attached via their hinge domain, and RAD21 which link them at their heads, and one STAG protein (STAG1, STAG2 or STAG3). In cohesin complexes, STAG2 is mutually exclusive with STAG1 and STAG3. Interacts directly with RAD21 in cohesin complex. In terms of processing, phosphorylated by PLK1. The large dissociation of cohesin from chromosome arms during prophase is partly due to its phosphorylation.

Its subcellular location is the nucleus. The protein resides in the chromosome. It is found in the centromere. Its function is as follows. Component of cohesin complex, a complex required for the cohesion of sister chromatids after DNA replication. The cohesin complex apparently forms a large proteinaceous ring within which sister chromatids can be trapped. At anaphase, the complex is cleaved and dissociates from chromatin, allowing sister chromatids to segregate. The cohesin complex may also play a role in spindle pole assembly during mitosis. The sequence is that of Cohesin subunit SA-2 (stag2) from Xenopus laevis (African clawed frog).